A 338-amino-acid polypeptide reads, in one-letter code: tRNA N6-adenosine threonylcarbamoyltransferase (338 aa).

The Fe cation site is built by His111 and His115. Residues 134–138, Asp167, Gly180, and Asn272 contribute to the substrate site; that span reads LVSGG. Residue Asp300 coordinates Fe cation.

Belongs to the KAE1 / TsaD family. Requires Fe(2+) as cofactor.

The protein resides in the cytoplasm. The catalysed reaction is L-threonylcarbamoyladenylate + adenosine(37) in tRNA = N(6)-L-threonylcarbamoyladenosine(37) in tRNA + AMP + H(+). Required for the formation of a threonylcarbamoyl group on adenosine at position 37 (t(6)A37) in tRNAs that read codons beginning with adenine. Is involved in the transfer of the threonylcarbamoyl moiety of threonylcarbamoyl-AMP (TC-AMP) to the N6 group of A37, together with TsaE and TsaB. TsaD likely plays a direct catalytic role in this reaction. In Aliivibrio salmonicida (strain LFI1238) (Vibrio salmonicida (strain LFI1238)), this protein is tRNA N6-adenosine threonylcarbamoyltransferase.